A 232-amino-acid polypeptide reads, in one-letter code: Orotidine 5'-phosphate decarboxylase (232 aa).

Substrate is bound by residues Asp-11, Lys-32, 59–68 (DLKLHDIPHT), Thr-116, Arg-178, Gln-188, Gly-208, and Arg-209. Lys-61 functions as the Proton donor in the catalytic mechanism.

The protein belongs to the OMP decarboxylase family. Type 1 subfamily. As to quaternary structure, homodimer.

The enzyme catalyses orotidine 5'-phosphate + H(+) = UMP + CO2. The protein operates within pyrimidine metabolism; UMP biosynthesis via de novo pathway; UMP from orotate: step 2/2. Catalyzes the decarboxylation of orotidine 5'-monophosphate (OMP) to uridine 5'-monophosphate (UMP). The chain is Orotidine 5'-phosphate decarboxylase from Synechococcus sp. (strain JA-3-3Ab) (Cyanobacteria bacterium Yellowstone A-Prime).